We begin with the raw amino-acid sequence, 866 residues long: MSTKEIKETPLMKQYNEIKRKYPDACLLFRVGDFYETFGDDAVRASKILGITLTKRGAGSPTETALAGFPHHSINTYLPKLVKAGLRVAICDQLEDPKMTKTIVKRGVTELVTPGVSMNDEVLNSKTNNFLASIYFGKKIIGVSFLDVSTGEFLTSEGNEEYIDKLLQNFSPSEILVPKQNKGDFKEKFGDNFHAFYLEDWVYKEDYATETLTNHFQTNSLKGFGIEELASGIIASGAILYYLSETQHNKIQHITSIHRIAEDAYVWMDRFTIRNLELYHSYNPNAVTLLDIIDKTLSPMGGRMLKRWLALPLKNATIIKSRHEVVAYFKDHQEILQKVQNQIKQISDLERLISKVAAGRISPREIIYLKESLDAIIPIKELALKSPQEAVKVIGDSLHSCDLLREKIKTTLNQEAPVAISKGNAIAAGIHPELDELRGISALGKEYLEGIEKRESEKTGISSLKISFNNVFGYYIEVRNTHKDKVPTEWIRKQTLVNAERYITEELKEYETKILGAEEKIQQIENQLFEQLVSWIATYIKPVQLNANLIAQLDCLISFTQLAIDNKYVCPQINDSFALDIKNGRHPVIEKQLPIGVPYIANDVYLDRDTQQLIMITGPNMSGKSAILRQTALIVLLAQMGSFVPAESVQMGIVDKIFTRVGASDNISMGESTFMVEMNETASILNNISDRSLVLLDEIGRGTSTYDGVSIAWAIAEFLHENPAQPKTLFATHYHELNEMTESLPRIQNYNVSVKELKDTVLFIRKLVKGGSAHSFGIHVAKMAGMPQIVLQKAEKILKKLEKNHSAEALSGTKGNKDDIQLSIFNLDDPLLEEIKEEILNLDINTLTPVEALMKLNEIKRMLSKK.

618-625 (GPNMSGKS) is an ATP binding site.

Belongs to the DNA mismatch repair MutS family.

Functionally, this protein is involved in the repair of mismatches in DNA. It is possible that it carries out the mismatch recognition step. This protein has a weak ATPase activity. The protein is DNA mismatch repair protein MutS of Flavobacterium psychrophilum (strain ATCC 49511 / DSM 21280 / CIP 103535 / JIP02/86).